Here is a 366-residue protein sequence, read N- to C-terminus: Protein sigma-NS (366 aa).

The important for ssRNA-binding and formation of complexes stretch occupies residues 1–11; that stretch reads MASSLRAAISK.

Belongs to the orthoreovirus sigma-NS protein family. As to quaternary structure, homooligomer; in presence of RNA. Interacts with protein mu-NS; this interaction allows the localization of sigma-NS to the viral factories. Interacts with host G3BP1 (via C-terminus); this interaction induces the relocalization of G3BP1 and other SG proteins to the viral factories periphery.

It is found in the host cytoplasm. In terms of biological role, protein that binds to ssRNA and participates with protein mu-NS in forming the matrix of viral factories, which are large inclusions in the host cytoplasm where replication intermediates are assembled and viral RNA replication takes place. Plays a role in the inhibition of the integrated stress response (ISR) to escape from host cell translational shutoff. Participates in the disruption of stress granules (SG) through its association with host G3BP1 and mu-NS. The sequence is that of Protein sigma-NS (S3) from Mammalia (T2J).